Here is a 354-residue protein sequence, read N- to C-terminus: UDP-3-O-acylglucosamine N-acyltransferase (354 aa).

The active-site Proton acceptor is the histidine 247.

It belongs to the transferase hexapeptide repeat family. LpxD subfamily. Homotrimer.

The enzyme catalyses a UDP-3-O-[(3R)-3-hydroxyacyl]-alpha-D-glucosamine + a (3R)-hydroxyacyl-[ACP] = a UDP-2-N,3-O-bis[(3R)-3-hydroxyacyl]-alpha-D-glucosamine + holo-[ACP] + H(+). The protein operates within bacterial outer membrane biogenesis; LPS lipid A biosynthesis. Functionally, catalyzes the N-acylation of UDP-3-O-acylglucosamine using 3-hydroxyacyl-ACP as the acyl donor. Is involved in the biosynthesis of lipid A, a phosphorylated glycolipid that anchors the lipopolysaccharide to the outer membrane of the cell. In Chlamydia trachomatis serovar L2b (strain UCH-1/proctitis), this protein is UDP-3-O-acylglucosamine N-acyltransferase.